Consider the following 335-residue polypeptide: Tetraacyldisaccharide 4'-kinase (335 aa).

59 to 66 (TAGGNGKT) serves as a coordination point for ATP.

It belongs to the LpxK family.

It carries out the reaction a lipid A disaccharide + ATP = a lipid IVA + ADP + H(+). Its pathway is glycolipid biosynthesis; lipid IV(A) biosynthesis; lipid IV(A) from (3R)-3-hydroxytetradecanoyl-[acyl-carrier-protein] and UDP-N-acetyl-alpha-D-glucosamine: step 6/6. Its function is as follows. Transfers the gamma-phosphate of ATP to the 4'-position of a tetraacyldisaccharide 1-phosphate intermediate (termed DS-1-P) to form tetraacyldisaccharide 1,4'-bis-phosphate (lipid IVA). This chain is Tetraacyldisaccharide 4'-kinase, found in Vibrio campbellii (strain ATCC BAA-1116).